We begin with the raw amino-acid sequence, 454 residues long: UPF0210 protein EUBREC_1565 (454 aa).

Belongs to the UPF0210 family. As to quaternary structure, homodimer.

This chain is UPF0210 protein EUBREC_1565, found in Agathobacter rectalis (strain ATCC 33656 / DSM 3377 / JCM 17463 / KCTC 5835 / VPI 0990) (Eubacterium rectale).